Reading from the N-terminus, the 611-residue chain is Virulence metalloprotease (611 aa).

The N-terminal stretch at 1-25 (MKKVQRQMKWLFLAASISAALPVSA) is a signal peptide. Positions 26–199 (AKMVQVDDPS…VLQTWEGLNH (174 aa)) are excised as a propeptide. His-346 lines the Zn(2+) pocket. Glu-347 is an active-site residue. His-350 and Glu-370 together coordinate Zn(2+). Catalysis depends on His-429, which acts as the Proton donor.

The protein belongs to the peptidase M4 family. Ca(2+) serves as cofactor. The cofactor is Zn(2+). Post-translationally, seems to be more extensively processed.

The protein localises to the secreted. Extracellular zinc metalloprotease involved in the virulence mechanism of V.anguillarum. In Vibrio anguillarum (Listonella anguillarum), this protein is Virulence metalloprotease (empA).